Consider the following 100-residue polypeptide: Urease subunit gamma (100 aa).

It belongs to the urease gamma subunit family. Heterotrimer of UreA (gamma), UreB (beta) and UreC (alpha) subunits. Three heterotrimers associate to form the active enzyme.

The protein localises to the cytoplasm. The catalysed reaction is urea + 2 H2O + H(+) = hydrogencarbonate + 2 NH4(+). The protein operates within nitrogen metabolism; urea degradation; CO(2) and NH(3) from urea (urease route): step 1/1. The chain is Urease subunit gamma from Lachnoclostridium phytofermentans (strain ATCC 700394 / DSM 18823 / ISDg) (Clostridium phytofermentans).